A 204-amino-acid polypeptide reads, in one-letter code: Holliday junction branch migration complex subunit RuvA (204 aa).

The segment at 1-64 is domain I; that stretch reads MIGRLQGILL…EDAHLLFGFA (64 aa). A domain II region spans residues 65-143; that stretch reads QKTDRTLFRE…GIKQSDFFVE (79 aa). The tract at residues 144–155 is flexible linker; the sequence is STHIPLSPSIES. The interval 156–204 is domain III; the sequence is HSESSSDEAISALIALGYKPAEAEKMVKRVAKPELTSEQVIREALKAAL.

Belongs to the RuvA family. In terms of assembly, homotetramer. Forms an RuvA(8)-RuvB(12)-Holliday junction (HJ) complex. HJ DNA is sandwiched between 2 RuvA tetramers; dsDNA enters through RuvA and exits via RuvB. An RuvB hexamer assembles on each DNA strand where it exits the tetramer. Each RuvB hexamer is contacted by two RuvA subunits (via domain III) on 2 adjacent RuvB subunits; this complex drives branch migration. In the full resolvosome a probable DNA-RuvA(4)-RuvB(12)-RuvC(2) complex forms which resolves the HJ.

The protein localises to the cytoplasm. Functionally, the RuvA-RuvB-RuvC complex processes Holliday junction (HJ) DNA during genetic recombination and DNA repair, while the RuvA-RuvB complex plays an important role in the rescue of blocked DNA replication forks via replication fork reversal (RFR). RuvA specifically binds to HJ cruciform DNA, conferring on it an open structure. The RuvB hexamer acts as an ATP-dependent pump, pulling dsDNA into and through the RuvAB complex. HJ branch migration allows RuvC to scan DNA until it finds its consensus sequence, where it cleaves and resolves the cruciform DNA. This Haemophilus influenzae (strain 86-028NP) protein is Holliday junction branch migration complex subunit RuvA.